The following is a 470-amino-acid chain: Uronate isomerase (470 aa).

This sequence belongs to the metallo-dependent hydrolases superfamily. Uronate isomerase family.

It carries out the reaction D-glucuronate = D-fructuronate. The catalysed reaction is aldehydo-D-galacturonate = keto-D-tagaturonate. The protein operates within carbohydrate metabolism; pentose and glucuronate interconversion. The chain is Uronate isomerase from Vibrio vulnificus (strain CMCP6).